Reading from the N-terminus, the 219-residue chain is Elongation factor Ts (219 aa).

Residues 82–85 form an involved in Mg(2+) ion dislocation from EF-Tu region; the sequence is TDFV.

It belongs to the EF-Ts family.

The protein localises to the cytoplasm. Associates with the EF-Tu.GDP complex and induces the exchange of GDP to GTP. It remains bound to the aminoacyl-tRNA.EF-Tu.GTP complex up to the GTP hydrolysis stage on the ribosome. The protein is Elongation factor Ts of Gloeobacter violaceus (strain ATCC 29082 / PCC 7421).